Reading from the N-terminus, the 1102-residue chain is Protein MMS22-like (1102 aa).

This sequence belongs to the MMS22 family. MMS22L subfamily.

The protein localises to the nucleus. The protein resides in the chromosome. Involved in recombination-dependent repair of stalled or collapsed replication forks. The polypeptide is Protein MMS22-like (Drosophila melanogaster (Fruit fly)).